Here is a 290-residue protein sequence, read N- to C-terminus: ATP synthase gamma chain (290 aa).

The protein belongs to the ATPase gamma chain family. In terms of assembly, F-type ATPases have 2 components, CF(1) - the catalytic core - and CF(0) - the membrane proton channel. CF(1) has five subunits: alpha(3), beta(3), gamma(1), delta(1), epsilon(1). CF(0) has three main subunits: a, b and c.

The protein localises to the cell membrane. Its function is as follows. Produces ATP from ADP in the presence of a proton gradient across the membrane. The gamma chain is believed to be important in regulating ATPase activity and the flow of protons through the CF(0) complex. The polypeptide is ATP synthase gamma chain (Heliobacterium modesticaldum (strain ATCC 51547 / Ice1)).